The primary structure comprises 196 residues: uncharacterized protein (196 aa).

It belongs to the NAD(P)H dehydrogenase (quinone) family.

This is an uncharacterized protein from Escherichia coli (strain K12).